Reading from the N-terminus, the 290-residue chain is Glycine--tRNA ligase alpha subunit (290 aa).

It belongs to the class-II aminoacyl-tRNA synthetase family. As to quaternary structure, tetramer of two alpha and two beta subunits.

The protein localises to the cytoplasm. It carries out the reaction tRNA(Gly) + glycine + ATP = glycyl-tRNA(Gly) + AMP + diphosphate. The chain is Glycine--tRNA ligase alpha subunit from Syntrophotalea carbinolica (strain DSM 2380 / NBRC 103641 / GraBd1) (Pelobacter carbinolicus).